A 577-amino-acid chain; its full sequence is MNIQALINDKVSQALEAAGAPAGSPAAVRQSAKPQFGDYQANGVMGVAKKLGTNPREFAQKVLDVLDLDGIASKTEIAGPGFINIFLSEEFLAKQADAALADSRLGVAAEEAQTIVADYSAPNVAKEMHVGHLRSTIIGDAVVRTLEFLGHKVIRANHIGDWGTQFGMLIANLERVQQESGEVSMELADLEGFYRESKKLYDEDEEFAVKARNYVVKLQSGDEFCAEMWKKLVDVTMIQNQRNYDRLNVSLTRDDVMGESMYNDMLPKIVADLKAQGLAVEDDGAQVVFLEEFKNKDGEAMGVIVQKRDGGFLYTTTDIACAKYRYEELGADRVLYFIDSRQHQHLMQAWTIVRKAGYVPESVSLEHHAFGMMLGKDGKPFKTRAGGTVRLADLLDEAEVRAAQLIESKNPELDAEEKEKISKTVAMAAVKYSDLSKHRTTDYVFDWDNMLAFEGNTAPYMQYAYTRVASIFAKAGVAMDELQGDIQITDEKEKALIAKLLQFEEAVQSVAREGQPHIMCSYLFELAGQFSSFYEACPILVAEDEAVKQSRLKLAALTAKTIKQGLSLLGIETLERM.

The short motif at 122 to 132 (PNVAKEMHVGH) is the 'HIGH' region element.

This sequence belongs to the class-I aminoacyl-tRNA synthetase family. Monomer.

It localises to the cytoplasm. It catalyses the reaction tRNA(Arg) + L-arginine + ATP = L-arginyl-tRNA(Arg) + AMP + diphosphate. The polypeptide is Arginine--tRNA ligase (Vibrio parahaemolyticus serotype O3:K6 (strain RIMD 2210633)).